The primary structure comprises 162 residues: Ubiquitin D (162 aa).

Ubiquitin-like domains are found at residues 3 to 78 (SVRT…LKVV) and 87 to 160 (LFLV…THCT).

This sequence belongs to the ubiquitin D family. As to quaternary structure, interacts directly with the 26S proteasome. Interacts with NUB1; this interaction facilitates the linking of UBD-conjugated target protein to the proteasome complex and accelerates its own degradation and that of its conjugates. Interacts (via ubiquitin-like 1 domain) with the spindle checkpoint protein MAD2L1 during mitosis. Present in aggresomes of proteasome inhibited cells. Interacts with HDAC6 under proteasome impairment conditions. Forms a thioester with UBA6 in cells stimulated with tumor necrosis factor-alpha (TNFa) and interferon-gamma (IFNg). Interacts with SQSTM1 and TP53/p53. Post-translationally, can be acetylated. In terms of tissue distribution, mostly expressed in thymus and intestine.

The protein localises to the nucleus. The protein resides in the cytoplasm. Ubiquitin-like protein modifier which can be covalently attached to target proteins and subsequently leads to their degradation by the 26S proteasome, in a NUB1-dependent manner. Conjugation to the target protein is activated by UBA6 via adenylation of its C-terminal glycine. Probably functions as a survival factor. Promotes the expression of the proteasome subunit beta type-9 (PSMB9/LMP2). Regulates TNF-alpha-induced and LPS-mediated activation of the central mediator of innate immunity NF-kappa-B by promoting TNF-alpha-mediated proteasomal degradation of ubiquitinated-I-kappa-B-alpha. Required for TNF-alpha-induced p65 nuclear translocation in renal tubular epithelial cells (RTECs). May be involved in dendritic cell (DC) maturation, the process by which immature dendritic cells differentiate into fully competent antigen-presenting cells that initiate T-cell responses. Mediates mitotic non-disjunction and chromosome instability, in long-term in vitro culture and cancers, by abbreviating mitotic phase and impairing the kinetochore localization of MAD2L1 during the prometaphase stage of the cell cycle. May be involved in the formation of aggresomes when proteasome is saturated or impaired. Mediates apoptosis in a caspase-dependent manner, especially in renal epithelium and tubular cells during renal diseases. This chain is Ubiquitin D (Ubd), found in Mus musculus (Mouse).